Here is a 134-residue protein sequence, read N- to C-terminus: Putative protein KRIP1 (134 aa).

The interval 1 to 134 (MSPVHRSRTS…PDPALPLQML (134 aa)) is disordered. Composition is skewed to polar residues over residues 9–24 (TSQTQEAHKPTSTLSF), 43–55 (SQPNACSRQSHVS), and 64–79 (CSQSKVSPPGTATNPN). Residues 119–128 (PAKPALPDPA) are compositionally biased toward pro residues.

Abundant expression is found in prostate, restricted to cells of epithelial origin in normal and diseased glands. Very low expression is detected in pancreas and ovary.

It localises to the cytoplasm. The protein localises to the nucleus. The polypeptide is Putative protein KRIP1 (KLKP1) (Homo sapiens (Human)).